A 434-amino-acid chain; its full sequence is Chaperone SurA (434 aa).

The N-terminal stretch at 1–22 (MKKWKSSLLGIAIWSLAASSMA) is a signal peptide. PpiC domains are found at residues 173–274 (TVQF…KVND) and 283–383 (VTEV…EVLD).

The protein localises to the periplasm. It catalyses the reaction [protein]-peptidylproline (omega=180) = [protein]-peptidylproline (omega=0). Chaperone involved in the correct folding and assembly of outer membrane proteins. Recognizes specific patterns of aromatic residues and the orientation of their side chains, which are found more frequently in integral outer membrane proteins. May act in both early periplasmic and late outer membrane-associated steps of protein maturation. This Photobacterium profundum (strain SS9) protein is Chaperone SurA.